The following is an 85-amino-acid chain: Large ribosomal subunit protein bL27 (85 aa).

It belongs to the bacterial ribosomal protein bL27 family.

This chain is Large ribosomal subunit protein bL27, found in Xylella fastidiosa (strain Temecula1 / ATCC 700964).